Here is an 832-residue protein sequence, read N- to C-terminus: Putative beta-glucosidase (832 aa).

Residue aspartate 225 is part of the active site. The region spanning 397-556 (TGKHGYVAKF…DPETEIDYAV (160 aa)) is the PA14 domain.

Belongs to the glycosyl hydrolase 3 family.

Its subcellular location is the cytoplasm. It catalyses the reaction Hydrolysis of terminal, non-reducing beta-D-glucosyl residues with release of beta-D-glucose.. The sequence is that of Putative beta-glucosidase from Schizosaccharomyces pombe (strain 972 / ATCC 24843) (Fission yeast).